The following is a 348-amino-acid chain: Methylthioribose-1-phosphate isomerase (348 aa).

Residues arginine 47–alanine 49, arginine 90, and glutamine 196 contribute to the substrate site. Residue aspartate 237 is the Proton donor of the active site. Position 247–248 (asparagine 247–lysine 248) interacts with substrate.

The protein belongs to the eIF-2B alpha/beta/delta subunits family. MtnA subfamily.

It catalyses the reaction 5-(methylsulfanyl)-alpha-D-ribose 1-phosphate = 5-(methylsulfanyl)-D-ribulose 1-phosphate. Its pathway is amino-acid biosynthesis; L-methionine biosynthesis via salvage pathway; L-methionine from S-methyl-5-thio-alpha-D-ribose 1-phosphate: step 1/6. Catalyzes the interconversion of methylthioribose-1-phosphate (MTR-1-P) into methylthioribulose-1-phosphate (MTRu-1-P). This Synechococcus sp. (strain ATCC 27144 / PCC 6301 / SAUG 1402/1) (Anacystis nidulans) protein is Methylthioribose-1-phosphate isomerase.